The following is a 1554-amino-acid chain: Myosin-2 (1554 aa).

Residues 4 to 57 (EVGTRCWYPDKQQGWIGGEITKHTNLSNKHQLELTLEDNQIVEIESETLDETKD) form the Myosin N-terminal SH3-like domain. Residues 70–774 (EATEDLTSLS…MLAYLEKLRS (705 aa)) enclose the Myosin motor domain. An ATP-binding site is contributed by 164 to 171 (GESGAGKT). The segment at 443–523 (FIGVLDIYGF…LGILSLLDEE (81 aa)) is actin-binding. IQ domains are found at residues 778–798 (HNSS…KKYL), 800–824 (IISS…DLEF), 825–847 (KTQA…KTIS), 848–872 (LLSA…LQRR), 873–895 (QRDA…SFNT), and 896–925 (TRRS…EAKS). Positions 926-1079 (VNHLKEVSYK…IARLQAAVRS (154 aa)) form a coiled coil. Residues 1080–1554 (GVTSSTITST…VTVQESQRTE (475 aa)) are non alpha-helical, tail domain. Residues 1082–1093 (TSSTITSTPTAS) show a composition bias toward low complexity. Residues 1082-1109 (TSSTITSTPTASRRFSAHSSVADGTSPR) are disordered. Polar residues predominate over residues 1098-1109 (AHSSVADGTSPR). A Dilute domain is found at 1205–1480 (AEVLSTIQKL…LNFVADRVKK (276 aa)).

This sequence belongs to the TRAFAC class myosin-kinesin ATPase superfamily. Myosin family. In terms of assembly, homodimer. Interacts with calmodulin (CMD1) and the myosin light chain MLC1 through its IQ repeats.

Its function is as follows. Myosin heavy chain that is required for the cell cycle-regulated transport of various organelles and proteins for their segregation. Functions by binding with its tail domain to receptor proteins on organelles and exerting force with its N-terminal motor domain against actin filaments, thereby transporting its cargo along polarized actin cables. This is Myosin-2 (MYO2) from Lachancea kluyveri (strain ATCC 58438 / CBS 3082 / BCRC 21498 / NBRC 1685 / JCM 7257 / NCYC 543 / NRRL Y-12651) (Yeast).